A 713-amino-acid polypeptide reads, in one-letter code: Probable muscarinic acetylcholine receptor gar-1 (713 aa).

The Extracellular portion of the chain corresponds to 1 to 20 (MPNYTVPPDPADTSWDSPYS). The N-linked (GlcNAc...) asparagine glycan is linked to asparagine 3. A helical transmembrane segment spans residues 21 to 41 (IPVQIVVWIIIIVLSLETIIG). Residues 42–66 (NAMVVMAYRIERNISKQVSNRYIVS) are Cytoplasmic-facing. The helical transmembrane segment at 67–87 (LAISDLIIGIEGFPFFTVYVL) threads the bilayer. The Extracellular portion of the chain corresponds to 88–101 (NGDRWPLGWVACQT). Cysteine 99 and cysteine 180 are oxidised to a cystine. Residues 102–122 (WLFLDYTLCLVSILTVLLITA) form a helical membrane-spanning segment. The Cytoplasmic segment spans residues 123-144 (DRYLSVCHTAKYLKWQSPTKTQ). A helical transmembrane segment spans residues 145–165 (LLIVMSWLLPAIIFGIMIYGW). Residues 166-189 (QAMTGQSTSMSGAECSAPFLSNPY) are Extracellular-facing. Residues 190–210 (VNMGMYVAYYWTTLVAMLILY) traverse the membrane as a helical segment. Over 211–633 (KGIHQAAKNL…QTKAEKRAHK (423 aa)) the chain is Cytoplasmic. Disordered stretches follow at residues 256-350 (KEKA…SRRC), 381-403 (SRYSASESITTTHENDEKEVEKA), 427-475 (KNTD…KQAE), and 515-585 (LIRR…TDTF). Composition is skewed to polar residues over residues 266-275 (SGYTSNQAGD) and 287-315 (PETSQFRVDPNSNNNLNVEGSLNTENDQN). 2 stretches are compositionally biased toward basic and acidic residues: residues 320–333 (EEERSGFLSRRESN) and 393–403 (HENDEKEVEKA). Residues 429-439 (TDSNNDSDTTS) show a composition bias toward low complexity. The segment covering 444–457 (RSRKYKKNKRPRSS) has biased composition (basic residues). A compositionally biased stretch (polar residues) spans 557 to 571 (LTVNNENRGETSSQP). The helical transmembrane segment at 634–656 (AFRTITFIVGFFAILWSPYYIMA) threads the bilayer. The Extracellular portion of the chain corresponds to 657–670 (TVYGFCKGECIPSF). The helical transmembrane segment at 671–693 (LYTLSYYMCYLNSSGNPFAYALA) threads the bilayer. At 694 to 713 (NRQFRSAFMRMFRGNFNKVA) the chain is on the cytoplasmic side.

Belongs to the G-protein coupled receptor 1 family. Muscarinic acetylcholine receptor subfamily. As to expression, expressed in head region of the larva. In adults, expression is seen in the periventricularis magnocellularis (PVM) neuron.

The protein resides in the cell membrane. Functionally, the muscarinic acetylcholine receptor mediates various cellular responses, including inhibition of adenylate cyclase, breakdown of phosphoinositides and modulation of potassium channels through the action of G proteins. Primary transducing effect is Pi turnover. In Caenorhabditis elegans, this protein is Probable muscarinic acetylcholine receptor gar-1 (gar-1).